An 89-amino-acid chain; its full sequence is MALLDFFLSRKKSTANIAKERLQIIVAERRRGDNEPHYLPQLKRDLLEVISKYVQIDPEMLSVQLEKKDGDISILELNVTLPETEETTK.

The protein belongs to the MinE family.

Prevents the cell division inhibition by proteins MinC and MinD at internal division sites while permitting inhibition at polar sites. This ensures cell division at the proper site by restricting the formation of a division septum at the midpoint of the long axis of the cell. This Sodalis glossinidius (strain morsitans) protein is Cell division topological specificity factor.